Here is an 89-residue protein sequence, read N- to C-terminus: Small ribosomal subunit protein uS15 (89 aa).

The protein belongs to the universal ribosomal protein uS15 family. As to quaternary structure, part of the 30S ribosomal subunit. Forms a bridge to the 50S subunit in the 70S ribosome, contacting the 23S rRNA.

Functionally, one of the primary rRNA binding proteins, it binds directly to 16S rRNA where it helps nucleate assembly of the platform of the 30S subunit by binding and bridging several RNA helices of the 16S rRNA. Its function is as follows. Forms an intersubunit bridge (bridge B4) with the 23S rRNA of the 50S subunit in the ribosome. The chain is Small ribosomal subunit protein uS15 from Streptococcus pyogenes serotype M1.